Consider the following 783-residue polypeptide: Rho GTPase-activating protein gacR (783 aa).

A coiled-coil region spans residues 138–188; it reads AKNRFDKARLSFDEASEQFKQLRKKQNNINNEKLLEAEEDLDYATQQFSDI. The segment at 262–299 is disordered; that stretch reads QFEQTNSSRTISLPPPPPPKPTSSTPSSSPSPSPSSSI. Residues 283 to 299 show a composition bias toward low complexity; the sequence is TSSTPSSSPSPSPSSSI. The 191-residue stretch at 319–509 folds into the Rho-GAP domain; the sequence is MALSTITERE…FIISNFNNIF (191 aa). Positions 527-539 are enriched in gly residues; it reads GSSGGGGGGGSSG. The segment at 527 to 745 is disordered; sequence GSSGGGGGGG…TTNSRPLSNS (219 aa). Composition is skewed to low complexity over residues 568–589, 599–630, 641–651, and 661–698; these read SVNT…ASSA, PSSS…NINP, PKKISSSSNSL, and SIPE…RSST. Polar residues predominate over residues 706–738; it reads NRVSMYLQNSNTGVPLPSQKPQRVISNNNTTTN.

Its subcellular location is the cytoplasm. In terms of biological role, rho GTPase-activating protein involved in the signal transduction pathway. The protein is Rho GTPase-activating protein gacR (gacR) of Dictyostelium discoideum (Social amoeba).